The sequence spans 86 residues: Small ribosomal subunit protein bS20 (86 aa).

A disordered region spans residues 1–25 (MANIKSQQKRNKTNERARLRNKSVK).

The protein belongs to the bacterial ribosomal protein bS20 family.

Binds directly to 16S ribosomal RNA. The protein is Small ribosomal subunit protein bS20 of Mycobacterium avium (strain 104).